A 55-amino-acid polypeptide reads, in one-letter code: Large ribosomal subunit protein bL33 (55 aa).

The protein belongs to the bacterial ribosomal protein bL33 family.

This Rhizobium johnstonii (strain DSM 114642 / LMG 32736 / 3841) (Rhizobium leguminosarum bv. viciae) protein is Large ribosomal subunit protein bL33.